Reading from the N-terminus, the 63-residue chain is Cecropin-1 (63 aa).

Residues 1–21 (MNFNKVFILVAIVIAIFAGQT) form the signal peptide. Residues 22–23 (EA) constitute a propeptide that is removed on maturation. Residue Arg-62 is modified to Arginine amide.

Belongs to the cecropin family.

The protein localises to the secreted. Its function is as follows. Cecropins have lytic and antibacterial activity against several Gram-positive and Gram-negative bacteria. This chain is Cecropin-1 (CEC1), found in Ceratitis capitata (Mediterranean fruit fly).